The chain runs to 231 residues: NADH-ubiquinone oxidoreductase chain 4 (231 aa).

7 helical membrane passes run 1-21 (PIAGSMVLAAILLKLGGYGII), 34-54 (LFLPFIVLALWGAILANLTCL), 63-85 (IAYSSISHMGLVVAAIIIQTPWG), 89-111 (AMALMIAHGFTSSALFCLANTTY), 128-148 (ILPMATTWWLVTNLMNIAIPP), 156-176 (LLIMSALFNWCPTTIIMLGLS), and 211-231 (LLIALHLAPLLMISLKPELVI).

The protein belongs to the complex I subunit 4 family.

Its subcellular location is the mitochondrion membrane. It catalyses the reaction a ubiquinone + NADH + 5 H(+)(in) = a ubiquinol + NAD(+) + 4 H(+)(out). Functionally, core subunit of the mitochondrial membrane respiratory chain NADH dehydrogenase (Complex I) that is believed to belong to the minimal assembly required for catalysis. Complex I functions in the transfer of electrons from NADH to the respiratory chain. The immediate electron acceptor for the enzyme is believed to be ubiquinone. This chain is NADH-ubiquinone oxidoreductase chain 4 (MT-ND4), found in Crotalus adamanteus (Eastern diamondback rattlesnake).